Here is a 490-residue protein sequence, read N- to C-terminus: GTPase Der (490 aa).

EngA-type G domains follow at residues 3–166 and 203–376; these read PVVA…MEDL and IKLA…DSST. GTP is bound by residues 9 to 16, 56 to 60, 118 to 121, 209 to 216, 256 to 260, and 321 to 324; these read GRPNVGKS, DTGGI, NKTD, DTAGV, and NKWD. The region spanning 377 to 461 is the KH-like domain; it reads RRVGTSMLTR…PIRIQFKEGE (85 aa).

The protein belongs to the TRAFAC class TrmE-Era-EngA-EngB-Septin-like GTPase superfamily. EngA (Der) GTPase family. As to quaternary structure, associates with the 50S ribosomal subunit.

Functionally, GTPase that plays an essential role in the late steps of ribosome biogenesis. This chain is GTPase Der, found in Escherichia fergusonii (strain ATCC 35469 / DSM 13698 / CCUG 18766 / IAM 14443 / JCM 21226 / LMG 7866 / NBRC 102419 / NCTC 12128 / CDC 0568-73).